A 492-amino-acid polypeptide reads, in one-letter code: Ribose import ATP-binding protein RbsA (492 aa).

ABC transporter domains lie at 3-239 (IEMK…VGRS) and 249-492 (AEIR…TGGQ). Position 35-42 (35-42 (GENGAGKS)) interacts with ATP.

Belongs to the ABC transporter superfamily. Ribose importer (TC 3.A.1.2.1) family. As to quaternary structure, the complex is composed of an ATP-binding protein (RbsA), two transmembrane proteins (RbsC) and a solute-binding protein (RbsB).

Its subcellular location is the cell membrane. It catalyses the reaction D-ribose(out) + ATP + H2O = D-ribose(in) + ADP + phosphate + H(+). Its function is as follows. Part of the ABC transporter complex RbsABC involved in ribose import. Responsible for energy coupling to the transport system. The protein is Ribose import ATP-binding protein RbsA of Lactococcus lactis subsp. lactis (strain IL1403) (Streptococcus lactis).